Reading from the N-terminus, the 458-residue chain is Probable M18 family aminopeptidase 1 (458 aa).

Zn(2+) contacts are provided by H95, H170, and H434.

It belongs to the peptidase M18 family. It depends on Zn(2+) as a cofactor.

The sequence is that of Probable M18 family aminopeptidase 1 (apeA) from Borreliella burgdorferi (strain ATCC 35210 / DSM 4680 / CIP 102532 / B31) (Borrelia burgdorferi).